A 228-amino-acid polypeptide reads, in one-letter code: MFDFGLGELIFVGIIALIVLGPERLPEAARTAGRLIGRLQRFVGSVKQELDTQIELEELRKVKQAFEAAAAQVRDSLKETDTDMQNSLHDISDGLKPWEKLPEQRTPADFGVDENGNPLPDTANTVSDGISDVMPSERSDTSAETLGDDRQTGSTAEPAETDKDRAWREYLTASAAAPVVQAVEVSYIDTAVETPVPHTTSLRKQAINRKRDFRPKHRAKPKLRVRKS.

The chain crosses the membrane as a helical span at residues 1-21 (MFDFGLGELIFVGIIALIVLG). Disordered regions lie at residues 106-164 (TPAD…TDKD) and 196-228 (VPHTTSLRKQAINRKRDFRPKHRAKPKLRVRKS). Positions 135–151 (PSERSDTSAETLGDDRQ) are enriched in basic and acidic residues. The span at 206–228 (AINRKRDFRPKHRAKPKLRVRKS) shows a compositional bias: basic residues.

Belongs to the TatB family. In terms of assembly, the Tat system comprises two distinct complexes: a TatABC complex, containing multiple copies of TatA, TatB and TatC subunits, and a separate TatA complex, containing only TatA subunits. Substrates initially bind to the TatABC complex, which probably triggers association of the separate TatA complex to form the active translocon.

The protein localises to the cell inner membrane. Part of the twin-arginine translocation (Tat) system that transports large folded proteins containing a characteristic twin-arginine motif in their signal peptide across membranes. Together with TatC, TatB is part of a receptor directly interacting with Tat signal peptides. TatB may form an oligomeric binding site that transiently accommodates folded Tat precursor proteins before their translocation. In Neisseria gonorrhoeae (strain ATCC 700825 / FA 1090), this protein is Sec-independent protein translocase protein TatB.